A 759-amino-acid chain; its full sequence is 1,4-alpha-glucan branching enzyme GlgB (759 aa).

Residues 1–21 (MAKTKGLPKDTAVTPSPHLRP) are disordered. Residue Asp-422 is the Nucleophile of the active site. The active-site Proton donor is the Glu-475.

This sequence belongs to the glycosyl hydrolase 13 family. GlgB subfamily. As to quaternary structure, monomer.

The enzyme catalyses Transfers a segment of a (1-&gt;4)-alpha-D-glucan chain to a primary hydroxy group in a similar glucan chain.. It functions in the pathway glycan biosynthesis; glycogen biosynthesis. In terms of biological role, catalyzes the formation of the alpha-1,6-glucosidic linkages in glycogen by scission of a 1,4-alpha-linked oligosaccharide from growing alpha-1,4-glucan chains and the subsequent attachment of the oligosaccharide to the alpha-1,6 position. This chain is 1,4-alpha-glucan branching enzyme GlgB, found in Mycobacterium sp. (strain JLS).